Here is a 424-residue protein sequence, read N- to C-terminus: Glutamyl-tRNA reductase (424 aa).

Substrate-binding positions include 51-54, S99, 104-106, and Q110; these read TCNR and EDQ. C52 acts as the Nucleophile in catalysis. An NADP(+)-binding site is contributed by 179–184; the sequence is GTGEMG.

The protein belongs to the glutamyl-tRNA reductase family. As to quaternary structure, homodimer.

It carries out the reaction (S)-4-amino-5-oxopentanoate + tRNA(Glu) + NADP(+) = L-glutamyl-tRNA(Glu) + NADPH + H(+). It participates in porphyrin-containing compound metabolism; protoporphyrin-IX biosynthesis; 5-aminolevulinate from L-glutamyl-tRNA(Glu): step 1/2. Its function is as follows. Catalyzes the NADPH-dependent reduction of glutamyl-tRNA(Glu) to glutamate 1-semialdehyde (GSA). In Methanospirillum hungatei JF-1 (strain ATCC 27890 / DSM 864 / NBRC 100397 / JF-1), this protein is Glutamyl-tRNA reductase.